Reading from the N-terminus, the 472-residue chain is MNVGHIVSVIGVVVDVEFAPGQVPDIYSAVKIRTEDQEDKSTKWNLTLEVAQHLGNNRVRCIAMSSTEGLKRGMKVVSTGKAISVPVGRPVLGRLLNVLGEEADGLEPIKAEKYYPIHRPAPALVDQSTKAEMLETGIKVIDLMIPFLKGGKIGLFGGAGVGKTVIVMELINNIAKQHGGISVFAGVGERTREGNDLYHEMKEAGVLEKTIMVFGQMNEPPGARLRVGLTGLTMAEFFRDEEGADTLLFIDNIFRFTQAGSEVSALLGRMPSAVGYQPTLATEMGQLQERITSTRKGSVTSVQAIYVPADDLTDPAPANAFAHLDATVVLSRAISELGIYPAVDPLDSTSRILDPQVVGKEHYECARGVQSVLQRYKELQDIIAILGMDELSDEDKLTVARARKLQRFLSQPFHVAETFTGRPGKYVSLKDTIRSFNEILAGKHDALPEQAFYMAGAIEEVMENAKRIEAGA.

Position 157 to 164 (157 to 164 (GGAGVGKT)) interacts with ATP.

Belongs to the ATPase alpha/beta chains family. As to quaternary structure, F-type ATPases have 2 components, CF(1) - the catalytic core - and CF(0) - the membrane proton channel. CF(1) has five subunits: alpha(3), beta(3), gamma(1), delta(1), epsilon(1). CF(0) has three main subunits: a(1), b(2) and c(9-12). The alpha and beta chains form an alternating ring which encloses part of the gamma chain. CF(1) is attached to CF(0) by a central stalk formed by the gamma and epsilon chains, while a peripheral stalk is formed by the delta and b chains.

Its subcellular location is the cell membrane. The catalysed reaction is ATP + H2O + 4 H(+)(in) = ADP + phosphate + 5 H(+)(out). Its function is as follows. Produces ATP from ADP in the presence of a proton gradient across the membrane. The catalytic sites are hosted primarily by the beta subunits. The protein is ATP synthase subunit beta of Desulforamulus reducens (strain ATCC BAA-1160 / DSM 100696 / MI-1) (Desulfotomaculum reducens).